We begin with the raw amino-acid sequence, 165 residues long: Lipoprotein signal peptidase (165 aa).

Helical transmembrane passes span 11–31 (YWVL…AVLS), 41–61 (VIPS…FSFL), 64–84 (QGGW…AYLV), and 92–112 (FATL…GNVI). Residues D122 and D140 contribute to the active site. Residues 132–152 (FYPAFNIADSFICVGAVLAVL) form a helical membrane-spanning segment.

This sequence belongs to the peptidase A8 family.

Its subcellular location is the cell inner membrane. It carries out the reaction Release of signal peptides from bacterial membrane prolipoproteins. Hydrolyzes -Xaa-Yaa-Zaa-|-(S,diacylglyceryl)Cys-, in which Xaa is hydrophobic (preferably Leu), and Yaa (Ala or Ser) and Zaa (Gly or Ala) have small, neutral side chains.. It participates in protein modification; lipoprotein biosynthesis (signal peptide cleavage). In terms of biological role, this protein specifically catalyzes the removal of signal peptides from prolipoproteins. This chain is Lipoprotein signal peptidase, found in Neisseria meningitidis serogroup A / serotype 4A (strain DSM 15465 / Z2491).